Here is a 146-residue protein sequence, read N- to C-terminus: uncharacterized protein (146 aa).

Residues 1–137 (MLSQEFFNSF…TINVMNQIHE (137 aa)) enclose the HTH marR-type domain.

This is an uncharacterized protein from Staphylococcus aureus (strain MRSA252).